The chain runs to 679 residues: G-protein-signaling modulator 2 (679 aa).

The important for interaction with NUMA1; INSC and FRMPD1 stretch occupies residues 22 to 357 (ASCLELALEG…HLEISREVGD (336 aa)). TPR repeat units follow at residues 24 to 57 (CLEL…GTED), 62 to 95 (SAIY…ARTI), 102 to 135 (AKAS…SREL), 142 to 184 (ARAL…AVDL), 202 to 235 (GRAF…AKEF), 242 to 275 (RRAY…ARQL), 282 to 315 (AQSC…AQEL), and 322 to 355 (GRAC…SREV). 2 positions are modified to phosphoserine: S408 and S484. A Phosphothreonine modification is found at T487. A GoLoco 1 domain is found at 490-512 (DEGFFDLLRRFQSNRMDDQRCHL). Phosphoserine occurs at positions 540 and 564. 3 GoLoco domains span residues 543–565 (TDEF…RASF), 594–616 (DEDF…RCAP), and 628–650 (DEDF…RVLL). 4 residues coordinate GDP: R608, R613, R642, and R647.

Belongs to the GPSM family. In terms of assembly, interacts with the dynein-dynactin complex; this interaction is inhibited in a PLK1-dependent manner. Part of a spindle orientation complex at least composed of GNAI1, GPSM2 and NUMA1. Interacts with LLGL2. Interacts (via TPR repeat region) with INSC/inscuteable. Interacts (via TPR repeat region) with NUMA1 (via C-terminus); this interaction is direct, inhibited in a PLK1-dependent manner and promotes spindle pole organization. INSC and NUMA1 compete for the same binding site, but INSC has higher affinity and can displace NUMA1 (in vitro). Interacts with GNAI2. Interacts (via GoLoco domains) with the GDP-bound form of GNAI1 and GNAI3; has much lower affinity for the GTP-bound form. Interaction with GDP-bound GNAI3 strongly enhances the affinity for NUMA1. Interacts (via TPR repeat region) with FRMPD1. INSC and FRMPD1 compete for the same binding site, but INSC has higher affinity and can displace FRMPD1 (in vitro). Interacts (via TPR repeat region) with FRMPD4. Identified in a complex with INSC and F2RL2/Par3. Interacts with TASOR. Detected in brain and liver (at protein level). Detected in brain, spleen, liver and testis, and at lower levels in heart, lung and kidney. Enriched in the ventricular zone of the developing central nervous systems. Expressed in proximal colon, ileum, ovary, Sertoli cells of the testis and granular cells within the cerebellum.

It is found in the cytoplasm. The protein resides in the cell cortex. Its subcellular location is the cytoskeleton. The protein localises to the spindle pole. It localises to the lateral cell membrane. In terms of biological role, plays an important role in mitotic spindle pole organization via its interaction with NUMA1. Required for cortical dynein-dynactin complex recruitment during metaphase. Plays a role in metaphase spindle orientation. Plays an important role in asymmetric cell divisions. Has guanine nucleotide dissociation inhibitor (GDI) activity towards G(i) alpha proteins, such as GNAI1 and GNAI3, and thereby regulates their activity. This chain is G-protein-signaling modulator 2 (Gpsm2), found in Mus musculus (Mouse).